The following is a 515-amino-acid chain: 1-pyrroline-5-carboxylate dehydrogenase (515 aa).

Residues Glu286 and Cys320 contribute to the active site.

The protein belongs to the aldehyde dehydrogenase family. RocA subfamily.

It carries out the reaction L-glutamate 5-semialdehyde + NAD(+) + H2O = L-glutamate + NADH + 2 H(+). It participates in amino-acid degradation; L-proline degradation into L-glutamate; L-glutamate from L-proline: step 2/2. This chain is 1-pyrroline-5-carboxylate dehydrogenase, found in Oceanobacillus iheyensis (strain DSM 14371 / CIP 107618 / JCM 11309 / KCTC 3954 / HTE831).